We begin with the raw amino-acid sequence, 347 residues long: 3',5'-bisphosphate nucleotidase 2 (347 aa).

The active-site Proton acceptor is the Asp46. Residues Glu71, Asp134, Ile136, and Asp137 each coordinate Mg(2+). Thr139 acts as the Proton acceptor in catalysis. 5 residues coordinate adenosine 3',5'-bisphosphate: Thr139, Ser255, Lys258, Arg272, and Asp284. The AMP site is built by Ser255, Lys258, Arg272, and Asp284. Asp284 is a binding site for Mg(2+).

Belongs to the inositol monophosphatase superfamily. Mg(2+) serves as cofactor. Very low expression in roots, leaves, stems, flowers and siliques.

The catalysed reaction is adenosine 3',5'-bisphosphate + H2O = AMP + phosphate. The enzyme catalyses 3'-phosphoadenylyl sulfate + H2O = adenosine 5'-phosphosulfate + phosphate. It carries out the reaction 1D-myo-inositol 1,4-bisphosphate + H2O = 1D-myo-inositol 4-phosphate + phosphate. Its pathway is signal transduction; phosphatidylinositol signaling pathway. Inhibited by Li(+) (IC(50)=10 mM), Na(+) (IC(50)=200 mM) and Ca(2+) (IC(50)=0.03 mM). Phosphatase that converts adenosine 3'-phosphate 5'-phosphosulfate (PAPS) to adenosine 5'-phosphosulfate (APS) and 3'-phosphoadenosine 5'-phosphate (3'-PAP) to AMP. May regulate the flux of sulfur in the sulfur-activation pathway by converting PAPS to APS. Prevents both the toxicity of PAP on RNA processing enzymes as well as the product inhibition by PAP of sulfate conjugation. Is also able to hydrolyze inositol 1,4-bisphosphate. In Arabidopsis thaliana (Mouse-ear cress), this protein is 3',5'-bisphosphate nucleotidase 2.